We begin with the raw amino-acid sequence, 319 residues long: MISRSIFSKSVSLQRSQNRSFLLTAASAVFGSMIFNENNQLASKMERGELHYDDPNASLNEKKVSPASNKYFSRRESEYPGHVPLYGIEKFMMFIGSGLGSFFHPENNANIVALGESTAIEPVLRKLQRQMLSDPVGRQILREKPRMTSTSLNLDHLRALPKNTLGHTYVSWLDREGVSPDTRVPVRFIDNEELAYIYQRYRECHDFYHAITGLPIIIEGEIAVKVLEFMNMGILMPGLGALLAPLRLKPSQRERLYSIYYPWAFRSGLNAKPLINVYWEKSLEMDVNELRRSLGIEQPPDLRNLRKEYFAKLKKEKRI.

Residues 1–28 constitute a mitochondrion transit peptide; it reads MISRSIFSKSVSLQRSQNRSFLLTAASA. Zn(2+)-binding residues include His-205, Asp-206, His-209, and Glu-221.

Belongs to the COQ4 family. As to quaternary structure, component of a multi-subunit COQ enzyme complex, composed of at least COQ3, COQ4, COQ5, COQ6, COQ7 and COQ9. Zn(2+) is required as a cofactor.

The protein resides in the mitochondrion inner membrane. It catalyses the reaction a 4-hydroxy-3-methoxy-5-(all-trans-polyprenyl)benzoate + H(+) = a 2-methoxy-6-(all-trans-polyprenyl)phenol + CO2. It participates in cofactor biosynthesis; ubiquinone biosynthesis. Functionally, lyase that catalyzes the C1-decarboxylation of 4-hydroxy-3-methoxy-5-(all-trans-polyprenyl)benzoic acid into 2-methoxy-6-(all-trans-polyprenyl)phenol during ubiquinone biosynthesis. In Clavispora lusitaniae (strain ATCC 42720) (Yeast), this protein is Ubiquinone biosynthesis protein COQ4, mitochondrial.